We begin with the raw amino-acid sequence, 327 residues long: Phenylalanine--tRNA ligase alpha subunit (327 aa).

Residue Glu252 coordinates Mg(2+).

The protein belongs to the class-II aminoacyl-tRNA synthetase family. Phe-tRNA synthetase alpha subunit type 1 subfamily. In terms of assembly, tetramer of two alpha and two beta subunits. Mg(2+) serves as cofactor.

It localises to the cytoplasm. It catalyses the reaction tRNA(Phe) + L-phenylalanine + ATP = L-phenylalanyl-tRNA(Phe) + AMP + diphosphate + H(+). In Shewanella woodyi (strain ATCC 51908 / MS32), this protein is Phenylalanine--tRNA ligase alpha subunit.